A 473-amino-acid chain; its full sequence is Crt homolog 1 (473 aa).

At 1–49 (MTNNDKEKQPLLSSINNEDDNGATINIVEPVPWYSNIPQKIKNSMSKET) the chain is on the cytoplasmic side. Residues 50–70 (ITILIYVVLYVTSGVINSVLL) form a helical membrane-spanning segment. At 71-80 (KKVMNKFTNY) the chain is on the vacuolar side. Residues 81 to 101 (AFFLSQLTNFGYVPIFGAVTA) form a helical membrane-spanning segment. Residues 102–121 (YKIFFTKDIPQETRDFPTRK) lie on the Cytoplasmic side of the membrane. The chain crosses the membrane as a helical span at residues 122–142 (FAIMGALDAITGFFVVIGGVS). Residues 143 to 146 (TSGP) are Vacuolar-facing. A helical transmembrane segment spans residues 147 to 167 (LQQLLNQAIIPFTMIASFIFL). Over 168-175 (KERYSLIQ) the chain is Cytoplasmic. Residues 176 to 196 (LGGALVIIGGVVTSLIPSLLG) traverse the membrane as a helical segment. Residues 197–207 (GSSGGNKPFWN) lie on the Vacuolar side of the membrane. The chain crosses the membrane as a helical span at residues 208-228 (FFYLLSVIPGALSNVYKDIGF). The Cytoplasmic portion of the chain corresponds to 229-248 (QAVADMDVWYLQYWDSLYQS). A helical membrane pass occupies residues 249 to 269 (IFGLFLFPVNNWLPPPATVKF). Over 270 to 322 (EQILPFMKEGAECLAGINSIIPSYINGTSSFTATSCTYAPDATITCDDCHNAW) the chain is Vacuolar. N-linked (GlcNAc...) asparagine glycosylation is present at Asn-295. The helical transmembrane segment at 323-343 (IVIILYMTINIIYNIFILLVL) threads the bilayer. Residues 344-352 (KHAGATVYS) lie on the Cytoplasmic side of the membrane. The chain crosses the membrane as a helical span at residues 353-373 (IANTLRLPLTNIVFSIHFIMG). Position 374 (Ser-374) is a topological domain, vacuolar. A helical membrane pass occupies residues 375-395 (AVSPFSGLSVAGLVIILVGLG). The Cytoplasmic segment spans residues 396-473 (GYRVGSMIKQ…AANNNNYGDA (78 aa)).

Belongs to the CRT-like transporter family.

It is found in the vacuole membrane. In terms of biological role, nutrient transporter. Involved in maintaining the osmotic homeostasis of the digestive vacuole. This chain is Crt homolog 1 (crtp1), found in Dictyostelium discoideum (Social amoeba).